Here is a 37-residue protein sequence, read N- to C-terminus: Cytochrome b6-f complex subunit 5 (37 aa).

A helical transmembrane segment spans residues 5-25 (LLSGIVLGLIVVTLAGLFYAA).

It belongs to the PetG family. In terms of assembly, the 4 large subunits of the cytochrome b6-f complex are cytochrome b6, subunit IV (17 kDa polypeptide, PetD), cytochrome f and the Rieske protein, while the 4 small subunits are PetG, PetL, PetM and PetN. The complex functions as a dimer.

Its subcellular location is the cellular thylakoid membrane. In terms of biological role, component of the cytochrome b6-f complex, which mediates electron transfer between photosystem II (PSII) and photosystem I (PSI), cyclic electron flow around PSI, and state transitions. PetG is required for either the stability or assembly of the cytochrome b6-f complex. The protein is Cytochrome b6-f complex subunit 5 of Anabaena variabilis.